Consider the following 72-residue polypeptide: Brevinin-2GHc (72 aa).

Residues M1 to C22 form the signal peptide. Positions E23–S42 are excised as a propeptide. A disulfide bridge connects residues C64 and C70.

In terms of tissue distribution, expressed by the skin glands.

It localises to the secreted. Its function is as follows. Antimicrobial peptide. Active against the Gram-positive bacteria S.aureus FDA209P (MIC=9.8 ug/ml) and B.subtilis ATCC 6633 (MIC&gt;64 ug/ml), and the Gram-negative bacteria E.coli O111 (MIC=19.6 ug/ml) and E.coli ATCC 25922 (MIC=9.8 ug/ml). Not active against the fungus C.albicans. This chain is Brevinin-2GHc, found in Sylvirana guentheri (Gunther's frog).